The chain runs to 553 residues: uncharacterized protein (553 aa).

2 helical membrane-spanning segments follow: residues 6 to 26 and 524 to 544; these read IKIF…QVDA and SYWI…GYVF.

The protein to M.jannaschii MJ0795 and MJ1506.

Its subcellular location is the cell membrane. This is an uncharacterized protein from Methanocaldococcus jannaschii (strain ATCC 43067 / DSM 2661 / JAL-1 / JCM 10045 / NBRC 100440) (Methanococcus jannaschii).